A 607-amino-acid chain; its full sequence is Guanine nucleotide-binding protein-like 1 (607 aa).

A compositionally biased stretch (basic residues) spans 1–14 (MPRKKPFSVKQKKK). The segment at 1 to 81 (MPRKKPFSVK…GPRGYDPNRY (81 aa)) is disordered. Residues 15–26 (QLQDKRERKRGL) show a composition bias toward basic and acidic residues. A phosphoserine mark is found at serine 32, serine 33, and serine 34. Residues threonine 48 and threonine 50 each carry the phosphothreonine modification. Residues serine 51 and serine 68 each carry the phosphoserine modification. One can recognise a CP-type G domain in the interval 178–418 (WRQLWRVLEM…LCDCPGLIFP (241 aa)). Residue 225–228 (NKVD) participates in GTP binding. Serine 324 is modified (phosphoserine). Residues 367 to 374 (GFPNVGKS) and 411 to 415 (DCPGL) each bind GTP. Residues 544–607 (GRVGPAGDEE…PYALLGEDEC (64 aa)) are disordered. Residues 550 to 585 (GDEEEEEEEELSSSCEEEGEEDRDADEEGEGDEDTP) are compositionally biased toward acidic residues. Phosphoserine occurs at positions 561, 562, and 563.

It belongs to the TRAFAC class YlqF/YawG GTPase family.

Functionally, possible regulatory or functional link with the histocompatibility cluster. This Mus musculus (Mouse) protein is Guanine nucleotide-binding protein-like 1 (Gnl1).